We begin with the raw amino-acid sequence, 399 residues long: Transmembrane protein 237 homolog (399 aa).

The segment covering 1-11 has biased composition (pro residues); sequence MPPTSRPVPPP. The interval 1–158 is disordered; sequence MPPTSRPVPP…PHDKRNMPAK (158 aa). 3 stretches are compositionally biased toward basic and acidic residues: residues 36 to 45, 111 to 135, and 144 to 158; these read NQQRRFRENN, EAAK…DPRR, and KSFR…MPAK. 4 helical membrane-spanning segments follow: residues 222–242, 256–276, 301–321, and 343–363; these read IANI…IFSF, MSLP…VSAI, GLIT…CIQL, and VFNV…AFKP.

This sequence belongs to the TMEM237 family.

Its subcellular location is the membrane. The protein resides in the cell projection. The protein localises to the cilium. Its function is as follows. Component of the transition zone in primary cilia. Required for ciliogenesis. The chain is Transmembrane protein 237 homolog from Caenorhabditis elegans.